A 159-amino-acid chain; its full sequence is uncharacterized protein (159 aa).

Residues 9 to 36 form a disordered region; it reads VTSGNKEKKKKRSSAGLTGHAPPAADSS.

This is an uncharacterized protein from Caenorhabditis elegans.